A 236-amino-acid chain; its full sequence is Phosphoribosylaminoimidazole-succinocarboxamide synthase (236 aa).

It belongs to the SAICAR synthetase family.

The catalysed reaction is 5-amino-1-(5-phospho-D-ribosyl)imidazole-4-carboxylate + L-aspartate + ATP = (2S)-2-[5-amino-1-(5-phospho-beta-D-ribosyl)imidazole-4-carboxamido]succinate + ADP + phosphate + 2 H(+). The protein operates within purine metabolism; IMP biosynthesis via de novo pathway; 5-amino-1-(5-phospho-D-ribosyl)imidazole-4-carboxamide from 5-amino-1-(5-phospho-D-ribosyl)imidazole-4-carboxylate: step 1/2. The sequence is that of Phosphoribosylaminoimidazole-succinocarboxamide synthase from Rickettsia africae (strain ESF-5).